Here is a 986-residue protein sequence, read N- to C-terminus: Probable ATP-dependent RNA helicase ddx42 (986 aa).

Disordered stretches follow at residues 1–149, 165–192, and 206–252; these read MSKR…DEDD, AAIDNSKSIEKGQQQQQSLKSKRDDIDN, and QLAN…IEPL. The span at 29–82 shows a compositional bias: low complexity; the sequence is SNINNNNNSNNNNNNNNNNNNNNNNNNNKNNIGTGINLNIKNNNNINNNNNKSG. The span at 105–117 shows a compositional bias: polar residues; it reads PPKSSMTTLNKSP. The segment covering 119 to 137 has biased composition (low complexity); the sequence is NFENASSNNNNNNNNNNQE. The segment covering 217–236 has biased composition (acidic residues); the sequence is DDDVDYSSLDDDDGYFDDEE. Positions 305-333 match the Q motif motif; that stretch reads TSFGHYGFDDILLQAIAKQSIETPTPIQK. The Helicase ATP-binding domain maps to 336 to 511; sequence IPIALSGRDL…RTILSDPIKI (176 aa). An ATP-binding site is contributed by 349 to 356; that stretch reads AKTGSGKT. Residues 459 to 462 carry the DEAD box motif; sequence DEAD. Residues 522-684 form the Helicase C-terminal domain; the sequence is DITQIVQVLK…FVPPELIDVA (163 aa). The disordered stretch occupies residues 688-986; that stretch reads PHFKRERGGG…FNQRSQYNRR (299 aa). A compositionally biased stretch (gly residues) spans 696 to 723; the sequence is GGGGGSNRGRGRGGGGVGYRRNSRGGGV. Composition is skewed to low complexity over residues 753–764 and 771–978; these read NPNNTDNSEINN and NNEN…NNFN.

Belongs to the DEAD box helicase family. DDX42 subfamily.

It is found in the nucleus. It carries out the reaction ATP + H2O = ADP + phosphate + H(+). In terms of biological role, probable ATP-dependent RNA helicase which may bind to partially double-stranded RNAs (dsRNAs) in order to unwind RNA secondary structures. This Dictyostelium discoideum (Social amoeba) protein is Probable ATP-dependent RNA helicase ddx42 (ddx42).